We begin with the raw amino-acid sequence, 507 residues long: MSMRTPEELSNLIKGLIEEYTPEVKMVDFGIVFQVGDGIARIYGLDRVMSGELLEFEDGTLGIALNLEANNVGAVLLGDGLKITEGSRVRCTGKIAEIPVGENYLGRVVDALARPVDGKGAISTNDTRAIESPAPGIVSRRSVYEPLQTGLVAVDAMIPIGRGQRELIIGDRQTGKTAIAVDTILNQKGKGVICVYVAIGQKASSVAQVLNSLKERGALDYTIIVMANANEPSTLQYLAPYTGATLAEYFMYTGRPTLTIYDDLSKQAQAYREMSLLLRRPPGREAYPGDVFYLHSRLLERAAKLSDALGEGSMTALPVVETQEGDVSAYIPTNVISITDGQIFLSGDLFNAGIRPAINVGISVSRVGSAAQIKAMKQVAGTLKLSLAQFAELEAFSQFASDLDAATQKQLARGSRLREILKQPQNSPLSVEEQVASIYTGTNGYLDSLEVLDVRPFLSGLRTYLTNNVPQYGEIVRKTNTFTPEAESLLKKAITDFLAEFGATKSN.

170–177 (GDRQTGKT) lines the ATP pocket.

The protein belongs to the ATPase alpha/beta chains family. In terms of assembly, F-type ATPases have 2 components, CF(1) - the catalytic core - and CF(0) - the membrane proton channel. CF(1) has five subunits: alpha(3), beta(3), gamma(1), delta(1), epsilon(1). CF(0) has four main subunits: a, b, b' and c.

Its subcellular location is the plastid. The protein resides in the chloroplast thylakoid membrane. It catalyses the reaction ATP + H2O + 4 H(+)(in) = ADP + phosphate + 5 H(+)(out). Functionally, produces ATP from ADP in the presence of a proton gradient across the membrane. The alpha chain is a regulatory subunit. The protein is ATP synthase subunit alpha, chloroplastic of Tetradesmus obliquus (Green alga).